The following is a 394-amino-acid chain: Chaperone protein DnaJ (394 aa).

Residues 5–75 (DYYEVLGVDK…EKKQQYDQFG (71 aa)) enclose the J domain. The segment at 150 to 231 (GVEKTIKYKR…CRGTGTAKET (82 aa)) adopts a CR-type zinc-finger fold. 8 residues coordinate Zn(2+): cysteine 163, cysteine 166, cysteine 179, cysteine 182, cysteine 205, cysteine 208, cysteine 219, and cysteine 222. CXXCXGXG motif repeat units lie at residues 163–170 (CEHCHGTG), 179–186 (CPTCNGQG), 205–212 (CPDCHGTG), and 219–226 (CKHCRGTG).

It belongs to the DnaJ family. As to quaternary structure, homodimer. The cofactor is Zn(2+).

It localises to the cytoplasm. Its function is as follows. Participates actively in the response to hyperosmotic and heat shock by preventing the aggregation of stress-denatured proteins and by disaggregating proteins, also in an autonomous, DnaK-independent fashion. Unfolded proteins bind initially to DnaJ; upon interaction with the DnaJ-bound protein, DnaK hydrolyzes its bound ATP, resulting in the formation of a stable complex. GrpE releases ADP from DnaK; ATP binding to DnaK triggers the release of the substrate protein, thus completing the reaction cycle. Several rounds of ATP-dependent interactions between DnaJ, DnaK and GrpE are required for fully efficient folding. Also involved, together with DnaK and GrpE, in the DNA replication of plasmids through activation of initiation proteins. This is Chaperone protein DnaJ from Fusobacterium nucleatum subsp. polymorphum (Fusobacterium polymorphum).